We begin with the raw amino-acid sequence, 241 residues long: Thiamine import ATP-binding protein ThiQ (241 aa).

The ABC transporter domain maps to 2–239 (IQLDKLNHCY…PKDEVLIQYL (238 aa)). Residue 41-48 (GPSGAGKS) coordinates ATP.

This sequence belongs to the ABC transporter superfamily. Thiamine importer (TC 3.A.1.19.1) family. As to quaternary structure, the complex is composed of two ATP-binding proteins (ThiQ), two transmembrane proteins (ThiP) and a solute-binding protein (ThiB).

Its subcellular location is the cell inner membrane. It carries out the reaction thiamine(out) + ATP + H2O = thiamine(in) + ADP + phosphate + H(+). Part of the ABC transporter complex ThiBPQ involved in thiamine import. Responsible for energy coupling to the transport system. The sequence is that of Thiamine import ATP-binding protein ThiQ from Photobacterium profundum (strain SS9).